The primary structure comprises 356 residues: Dihydroorotate dehydrogenase (quinone) (356 aa).

FMN contacts are provided by residues 67–71 and Thr-91; that span reads PGFDK. Substrate is bound at residue Lys-71. Residue 116-120 participates in substrate binding; sequence NRMGF. 2 residues coordinate FMN: Asn-147 and Asn-178. Residue Asn-178 participates in substrate binding. Ser-181 serves as the catalytic Nucleophile. Position 183 (Asn-183) interacts with substrate. Positions 218 and 246 each coordinate FMN. Substrate is bound at residue 247-248; that stretch reads NT. FMN is bound by residues Gly-268, Gly-297, and 318-319; that span reads YS.

The protein belongs to the dihydroorotate dehydrogenase family. Type 2 subfamily. As to quaternary structure, monomer. Requires FMN as cofactor.

The protein localises to the cell membrane. It carries out the reaction (S)-dihydroorotate + a quinone = orotate + a quinol. The protein operates within pyrimidine metabolism; UMP biosynthesis via de novo pathway; orotate from (S)-dihydroorotate (quinone route): step 1/1. Catalyzes the conversion of dihydroorotate to orotate with quinone as electron acceptor. The sequence is that of Dihydroorotate dehydrogenase (quinone) from Sphingopyxis alaskensis (strain DSM 13593 / LMG 18877 / RB2256) (Sphingomonas alaskensis).